Here is a 1392-residue protein sequence, read N- to C-terminus: DNA-directed RNA polymerase subunit beta' (1392 aa).

Zn(2+) contacts are provided by cysteine 70, cysteine 72, cysteine 85, and cysteine 88. Residues aspartate 460, aspartate 462, and aspartate 464 each coordinate Mg(2+). Residues cysteine 810, cysteine 884, cysteine 891, and cysteine 894 each contribute to the Zn(2+) site.

This sequence belongs to the RNA polymerase beta' chain family. The RNAP catalytic core consists of 2 alpha, 1 beta, 1 beta' and 1 omega subunit. When a sigma factor is associated with the core the holoenzyme is formed, which can initiate transcription. Requires Mg(2+) as cofactor. The cofactor is Zn(2+).

It catalyses the reaction RNA(n) + a ribonucleoside 5'-triphosphate = RNA(n+1) + diphosphate. In terms of biological role, DNA-dependent RNA polymerase catalyzes the transcription of DNA into RNA using the four ribonucleoside triphosphates as substrates. The chain is DNA-directed RNA polymerase subunit beta' from Geobacter metallireducens (strain ATCC 53774 / DSM 7210 / GS-15).